Consider the following 647-residue polypeptide: ATP-binding protein Uup (647 aa).

2 ABC transporter domains span residues 1 to 253 (MALI…RVEA) and 320 to 546 (FEME…AKAK). ATP-binding positions include 36 to 43 (GRNGAGKS) and 352 to 359 (GPNGCGKT). Residues 545–563 (AKKSEPLKEESAVKNDRTS) show a composition bias toward basic and acidic residues. Residues 545–569 (AKKSEPLKEESAVKNDRTSKPKSVK) form a disordered region. Positions 559–647 (NDRTSKPKSV…EKKNLVEGKA (89 aa)) are C-terminal domain (CTD), binds DNA.

This sequence belongs to the ABC transporter superfamily. ABCF family. Uup subfamily.

It is found in the cytoplasm. It catalyses the reaction ATP + H2O = ADP + phosphate + H(+). Its function is as follows. Probably plays a role in ribosome assembly or function. May be involved in resolution of branched DNA intermediates that result from template switching in postreplication gaps. Binds DNA and has ATPase activity. The chain is ATP-binding protein Uup from Haemophilus influenzae (strain ATCC 51907 / DSM 11121 / KW20 / Rd).